The sequence spans 440 residues: 23S rRNA (uracil(1939)-C(5))-methyltransferase RlmD (440 aa).

The 59-residue stretch at 10 to 68 (KALPTQAVEITIDNLDHHLTGVGRYQGKACFVEGVLPGEKVSVQITEQKKQYAHARLRQ) folds into the TRAM domain. Residues cysteine 81, cysteine 87, cysteine 90, and cysteine 169 each coordinate [4Fe-4S] cluster. The S-adenosyl-L-methionine site is built by glutamine 272, phenylalanine 301, asparagine 306, glutamate 322, aspartate 349, and aspartate 372. Cysteine 398 acts as the Nucleophile in catalysis.

It belongs to the class I-like SAM-binding methyltransferase superfamily. RNA M5U methyltransferase family. RlmD subfamily.

The enzyme catalyses uridine(1939) in 23S rRNA + S-adenosyl-L-methionine = 5-methyluridine(1939) in 23S rRNA + S-adenosyl-L-homocysteine + H(+). In terms of biological role, catalyzes the formation of 5-methyl-uridine at position 1939 (m5U1939) in 23S rRNA. The sequence is that of 23S rRNA (uracil(1939)-C(5))-methyltransferase RlmD from Tolumonas auensis (strain DSM 9187 / NBRC 110442 / TA 4).